The chain runs to 173 residues: Crossover junction endodeoxyribonuclease RuvC (173 aa).

Residues aspartate 8, glutamate 67, and aspartate 139 contribute to the active site. Residues aspartate 8, glutamate 67, and aspartate 139 each coordinate Mg(2+).

Belongs to the RuvC family. In terms of assembly, homodimer which binds Holliday junction (HJ) DNA. The HJ becomes 2-fold symmetrical on binding to RuvC with unstacked arms; it has a different conformation from HJ DNA in complex with RuvA. In the full resolvosome a probable DNA-RuvA(4)-RuvB(12)-RuvC(2) complex forms which resolves the HJ. Mg(2+) is required as a cofactor.

It is found in the cytoplasm. The catalysed reaction is Endonucleolytic cleavage at a junction such as a reciprocal single-stranded crossover between two homologous DNA duplexes (Holliday junction).. The RuvA-RuvB-RuvC complex processes Holliday junction (HJ) DNA during genetic recombination and DNA repair. Endonuclease that resolves HJ intermediates. Cleaves cruciform DNA by making single-stranded nicks across the HJ at symmetrical positions within the homologous arms, yielding a 5'-phosphate and a 3'-hydroxyl group; requires a central core of homology in the junction. The consensus cleavage sequence is 5'-(A/T)TT(C/G)-3'. Cleavage occurs on the 3'-side of the TT dinucleotide at the point of strand exchange. HJ branch migration catalyzed by RuvA-RuvB allows RuvC to scan DNA until it finds its consensus sequence, where it cleaves and resolves the cruciform DNA. The chain is Crossover junction endodeoxyribonuclease RuvC from Shewanella loihica (strain ATCC BAA-1088 / PV-4).